Consider the following 339-residue polypeptide: Ribosomal RNA large subunit methyltransferase F (339 aa).

The tract at residues 1 to 26 is disordered; it reads MTAPSTPKPQRKKPKTATTAKPVVPR.

The protein belongs to the methyltransferase superfamily. METTL16/RlmF family.

The protein localises to the cytoplasm. The enzyme catalyses adenosine(1618) in 23S rRNA + S-adenosyl-L-methionine = N(6)-methyladenosine(1618) in 23S rRNA + S-adenosyl-L-homocysteine + H(+). Specifically methylates the adenine in position 1618 of 23S rRNA. The protein is Ribosomal RNA large subunit methyltransferase F of Pseudomonas fluorescens (strain SBW25).